The sequence spans 255 residues: 4-diphosphocytidyl-2-C-methyl-D-erythritol kinase (255 aa).

The active site involves Lys-6. 95–105 provides a ligand contact to ATP; that stretch reads PVCAGLGGGSS. Asp-137 is an active-site residue.

This sequence belongs to the GHMP kinase family. IspE subfamily.

It catalyses the reaction 4-CDP-2-C-methyl-D-erythritol + ATP = 4-CDP-2-C-methyl-D-erythritol 2-phosphate + ADP + H(+). It functions in the pathway isoprenoid biosynthesis; isopentenyl diphosphate biosynthesis via DXP pathway; isopentenyl diphosphate from 1-deoxy-D-xylulose 5-phosphate: step 3/6. Functionally, catalyzes the phosphorylation of the position 2 hydroxy group of 4-diphosphocytidyl-2C-methyl-D-erythritol. The sequence is that of 4-diphosphocytidyl-2-C-methyl-D-erythritol kinase from Campylobacter jejuni subsp. jejuni serotype O:2 (strain ATCC 700819 / NCTC 11168).